The primary structure comprises 153 residues: Membrane protein FAM174B (153 aa).

A signal peptide spans 1-27 (MSALPPQPPPPLLLLLLALLAAPAALA). At 28 to 84 (RRAESASASQPEAEHQPPPGPGNATQLGSGMAGGGSSNSSVDAVVTRISSLLRDLPT) the chain is on the extracellular side. The interval 31-67 (ESASASQPEAEHQPPPGPGNATQLGSGMAGGGSSNSS) is disordered. N-linked (GlcNAc...) asparagine glycosylation is present at asparagine 50. Residues 85–105 (LKATVIVACAFSALLIACLLL) form a helical membrane-spanning segment. Topologically, residues 106–153 (RVFRLGKRLKKTRKYDIITTPAERVEMAPLNEEDDEDEDSTVFDIKYR) are cytoplasmic.

Belongs to the FAM174 family.

The protein resides in the cell membrane. It is found in the golgi apparatus. Functionally, essential for Golgi structural integrity. This chain is Membrane protein FAM174B (Fam174b), found in Mus musculus (Mouse).